Reading from the N-terminus, the 94-residue chain is Co-chaperonin GroES (94 aa).

The protein belongs to the GroES chaperonin family. Heptamer of 7 subunits arranged in a ring. Interacts with the chaperonin GroEL.

The protein localises to the cytoplasm. Together with the chaperonin GroEL, plays an essential role in assisting protein folding. The GroEL-GroES system forms a nano-cage that allows encapsulation of the non-native substrate proteins and provides a physical environment optimized to promote and accelerate protein folding. GroES binds to the apical surface of the GroEL ring, thereby capping the opening of the GroEL channel. The polypeptide is Co-chaperonin GroES (Listeria monocytogenes serotype 4b (strain CLIP80459)).